A 376-amino-acid chain; its full sequence is Erythronate-4-phosphate dehydrogenase (376 aa).

Residues serine 45 and threonine 67 each contribute to the substrate site. Aspartate 147 contributes to the NAD(+) binding site. Arginine 209 is a catalytic residue. Aspartate 233 is an NAD(+) binding site. Glutamate 238 is an active-site residue. Residue histidine 255 is the Proton donor of the active site. Glycine 258 serves as a coordination point for NAD(+). A substrate-binding site is contributed by tyrosine 259.

It belongs to the D-isomer specific 2-hydroxyacid dehydrogenase family. PdxB subfamily. Homodimer.

It is found in the cytoplasm. It carries out the reaction 4-phospho-D-erythronate + NAD(+) = (R)-3-hydroxy-2-oxo-4-phosphooxybutanoate + NADH + H(+). Its pathway is cofactor biosynthesis; pyridoxine 5'-phosphate biosynthesis; pyridoxine 5'-phosphate from D-erythrose 4-phosphate: step 2/5. Functionally, catalyzes the oxidation of erythronate-4-phosphate to 3-hydroxy-2-oxo-4-phosphonooxybutanoate. This Shewanella baltica (strain OS195) protein is Erythronate-4-phosphate dehydrogenase.